A 319-amino-acid chain; its full sequence is Secreted effector protein sopD2 (319 aa).

Positions 37–44 (WDRFKDCF) match the Required to target late endocytic compartments motif.

The protein belongs to the SopD family.

It is found in the secreted. The protein resides in the host cell membrane. Functionally, effector proteins function to alter host cell physiology and promote bacterial survival in host tissues. Contributes to the formation of Salmonella-induced filaments (Sifs) in infected epithelial cells and to replication in macrophages. The protein is Secreted effector protein sopD2 (sopD2) of Salmonella typhimurium (strain LT2 / SGSC1412 / ATCC 700720).